Consider the following 720-residue polypeptide: DNA ligase (720 aa).

NAD(+) contacts are provided by residues 60 to 64 (DYDYD), 109 to 110 (SL), and glutamate 140. Lysine 142 (N6-AMP-lysine intermediate) is an active-site residue. Positions 163 and 201 each coordinate NAD(+). The interval 220-239 (GLPPFANPRNAAAGSIRQKD) is disordered. Positions 320 and 344 each coordinate NAD(+). 4 residues coordinate Zn(2+): cysteine 438, cysteine 441, cysteine 456, and cysteine 461. Positions 619–709 (KVADVLKGKT…VDLEKIKKED (91 aa)) constitute a BRCT domain.

This sequence belongs to the NAD-dependent DNA ligase family. LigA subfamily. It depends on Mn(2+) as a cofactor. The cofactor is Mg(2+).

It catalyses the reaction NAD(+) + (deoxyribonucleotide)n-3'-hydroxyl + 5'-phospho-(deoxyribonucleotide)m = (deoxyribonucleotide)n+m + AMP + beta-nicotinamide D-nucleotide.. Its function is as follows. DNA ligase that catalyzes the formation of phosphodiester linkages between 5'-phosphoryl and 3'-hydroxyl groups in double-stranded DNA using NAD as a coenzyme and as the energy source for the reaction. It is essential for DNA replication and repair of damaged DNA. The polypeptide is DNA ligase (Aquifex aeolicus (strain VF5)).